A 216-amino-acid polypeptide reads, in one-letter code: Probable nicotinate-nucleotide adenylyltransferase (216 aa).

The protein belongs to the NadD family.

It carries out the reaction nicotinate beta-D-ribonucleotide + ATP + H(+) = deamido-NAD(+) + diphosphate. The protein operates within cofactor biosynthesis; NAD(+) biosynthesis; deamido-NAD(+) from nicotinate D-ribonucleotide: step 1/1. In terms of biological role, catalyzes the reversible adenylation of nicotinate mononucleotide (NaMN) to nicotinic acid adenine dinucleotide (NaAD). The chain is Probable nicotinate-nucleotide adenylyltransferase from Geobacter metallireducens (strain ATCC 53774 / DSM 7210 / GS-15).